A 381-amino-acid polypeptide reads, in one-letter code: uncharacterized protein (381 aa).

Residues 1–16 form the signal peptide; that stretch reads MQTLLFYFFFINLIFA. Topologically, residues 17 to 303 are lumenal; it reads HDLNVKTYKP…KILENSPCPN (287 aa). An intrachain disulfide couples cysteine 118 to cysteine 149. Asparagine 133, asparagine 192, asparagine 225, asparagine 243, asparagine 246, and asparagine 287 each carry an N-linked (GlcNAc...) asparagine glycan. Residues 304–324 form a helical membrane-spanning segment; sequence QPSIQPFGILMMLVSTIYGNF. Residues 325 to 359 are Cytoplasmic-facing; it reads KNLYNCIKRNTIGYIYNSIYDFWITEGMLFPMRNM. The helical transmembrane segment at 360–380 threads the bilayer; sequence DIFKITAISIGLSIPVFLWLL. Residue lysine 381 is a topological domain, lumenal.

Belongs to the calreticulin family.

It localises to the endoplasmic reticulum membrane. This is an uncharacterized protein from Schizosaccharomyces pombe (strain 972 / ATCC 24843) (Fission yeast).